The following is a 299-amino-acid chain: Neomycin C epimerase (299 aa).

The 213-residue stretch at 10-222 (PVRQVRAYRN…WNHIFETGRR (213 aa)) folds into the Radical SAM core domain. [4Fe-4S] cluster contacts are provided by C26, C30, C33, C226, and C247. C249 serves as the catalytic Proton donor. The [4Fe-4S] cluster site is built by C271 and C274.

The protein belongs to the radical SAM superfamily. It depends on [4Fe-4S] cluster as a cofactor.

It catalyses the reaction neomycin C + AH2 + S-adenosyl-L-methionine = neomycin B + 5'-deoxyadenosine + L-methionine + A + H(+). It functions in the pathway antibiotic biosynthesis; neomycin biosynthesis. In terms of biological role, catalyzes the last step of neomycin B biosynthesis, i.e. the irreversible epimerization at C-5''' of neomycin C to give neomycin B. To a lesser extent, is also able to convert neomycin Y2 to neomycin Y1. The chain is Neomycin C epimerase from Streptomyces fradiae (Streptomyces roseoflavus).